The following is a 467-amino-acid chain: tRNA-2-methylthio-N(6)-dimethylallyladenosine synthase (467 aa).

Residues 1–20 (MSDDTTQIEPAMAQETSPRA) form a disordered region. The region spanning 23–143 (RKVFVKTYGC…LPNALARVRG (121 aa)) is the MTTase N-terminal domain. [4Fe-4S] cluster-binding residues include Cys32, Cys68, Cys106, Cys184, Cys188, and Cys191. Positions 170 to 402 (RKRGVSAFLT…QALLSAQQYA (233 aa)) constitute a Radical SAM core domain. Residues 405-467 (DSMIGRKMDV…TNSLIAQKLA (63 aa)) form the TRAM domain.

It belongs to the methylthiotransferase family. MiaB subfamily. Monomer. [4Fe-4S] cluster serves as cofactor.

It localises to the cytoplasm. It catalyses the reaction N(6)-dimethylallyladenosine(37) in tRNA + (sulfur carrier)-SH + AH2 + 2 S-adenosyl-L-methionine = 2-methylsulfanyl-N(6)-dimethylallyladenosine(37) in tRNA + (sulfur carrier)-H + 5'-deoxyadenosine + L-methionine + A + S-adenosyl-L-homocysteine + 2 H(+). Catalyzes the methylthiolation of N6-(dimethylallyl)adenosine (i(6)A), leading to the formation of 2-methylthio-N6-(dimethylallyl)adenosine (ms(2)i(6)A) at position 37 in tRNAs that read codons beginning with uridine. This Brucella melitensis biotype 1 (strain ATCC 23456 / CCUG 17765 / NCTC 10094 / 16M) protein is tRNA-2-methylthio-N(6)-dimethylallyladenosine synthase.